The following is a 487-amino-acid chain: Transmembrane protein 161B (487 aa).

A glycan (N-linked (GlcNAc...) asparagine) is linked at Asn-34. A helical membrane pass occupies residues 107–127 (LVDFTVAATIVYLVTEVYYSF). N-linked (GlcNAc...) asparagine glycosylation occurs at Asn-135. 2 consecutive transmembrane segments (helical) span residues 136–156 (ISLV…FSLT) and 169–189 (SVCV…LIVT). N-linked (GlcNAc...) asparagine glycosylation is present at Asn-203. Transmembrane regions (helical) follow at residues 228 to 248 (FKFF…FPGL), 265 to 285 (ITQT…LLWV), 305 to 325 (LMTE…LCVL), 367 to 387 (VFYY…MLLH), and 459 to 479 (LSFL…FGLF).

Belongs to the TMEM161 family.

The protein resides in the cell membrane. Its function is as follows. Essential for maintaining normal cardiac rhythm in the developing heart and for neonatal survival. Inhibits potassium and calcium currents in the cardiomyocytes, this assists in timely action potential repolarization and thereby maintains normal cardiac rhythm. The chain is Transmembrane protein 161B (Tmem161b) from Mus musculus (Mouse).